Here is a 292-residue protein sequence, read N- to C-terminus: Claudin-23 (292 aa).

Over 1 to 3 (MRT) the chain is Cytoplasmic. The helical transmembrane segment at 4-24 (PVVMTLGMVLAPCGLLLNLTG) threads the bilayer. Residues 25–81 (TLAPGWRLVKGFLNQPVDVELYQGLWDMCREQSSRERECGQTDQWGYFEAQPVLVAR) lie on the Extracellular side of the membrane. A helical transmembrane segment spans residues 82–102 (ALMVTSLAATVLGLLLASLGV). The Cytoplasmic portion of the chain corresponds to 103–110 (RCWQDEPN). Residues 111 to 131 (FVLAGLSGVVLFVAGLLGLIP) form a helical membrane-spanning segment. Residues 132 to 160 (VSWYNHFLGDRDVLPAPASPVTVQVSYSL) are Extracellular-facing. Residues 161–181 (VLGYLGSCLLLLGGFSLALSF) form a helical membrane-spanning segment. Residues 182–292 (APWCDERCRR…DSSLPCDSDL (111 aa)) are Cytoplasmic-facing. A disordered region spans residues 222 to 292 (KYYSDGQHRP…DSSLPCDSDL (71 aa)). The segment covering 273–282 (DAPSCSTHPC) has biased composition (polar residues).

This sequence belongs to the claudin family. Expressed in germinal center B-cells, placenta, stomach as well as in colon tumor.

The protein localises to the cell junction. It localises to the tight junction. Its subcellular location is the cell membrane. Plays a major role in tight junction-specific obliteration of the intercellular space, through calcium-independent cell-adhesion activity. In Homo sapiens (Human), this protein is Claudin-23 (CLDN23).